The following is a 266-amino-acid chain: Type II iodothyronine deiodinase (266 aa).

The Lumenal portion of the chain corresponds to Met-1–Leu-9. The chain crosses the membrane as a helical; Signal-anchor for type III membrane protein span at residues Ile-10–Leu-34. Residues Lys-35–Asp-266 are Cytoplasmic-facing. Residue Sec-130 is part of the active site. Non-standard amino acids (selenocysteine) are located at Sec-130 and Sec-263.

It belongs to the iodothyronine deiodinase family. Predominantly monomer. Can form homodimers but homodimerization is not essential for enzyme activity. Interacts with USP20 and USP33. Interacts with MARCHF6. Post-translationally, ubiquitinated by MARCHF6, leading to its degradation by the proteasome. Deubiquitinated by USP20 and USP33. In terms of tissue distribution, expressed in cerebral cortex, cerebellum, pituitary gland, mostly in anterior pituitary gland, and pineal gland, as well as in brown adipose tissue (BAT).

It is found in the endoplasmic reticulum membrane. The enzyme catalyses 3,3',5-triiodo-L-thyronine + iodide + A + H(+) = L-thyroxine + AH2. The catalysed reaction is 3,3'-diiodo-L-thyronine + iodide + A + H(+) = 3,3',5'-triiodo-L-thyronine + AH2. It catalyses the reaction 3'-iodo-L-thyronine + iodide + A + H(+) = 3',5'-diiodo-L-thyronine + AH2. It carries out the reaction 3,3'-diiodothyronamine + iodide + A + H(+) = 3,3',5'-triiodothyronamine + AH2. The enzyme catalyses 3'-iodothyronamine + iodide + A + H(+) = 3',5'-diiodothyronamine + AH2. Plays a crucial role in the metabolism of thyroid hormones (TH) and has specific roles in TH activation and inactivation by deiodination. Catalyzes the deiodination of L-thyroxine (T4) to 3,5,3'-triiodothyronine (T3) and 3',5'-diiodothyronine (3',5'-T2) to 3'-monoiodothyronine (3'-T1) via outer-ring deiodination (ORD). Catalyzes the deiodination of 3,3',5'-triiodothyronine (rT3) to 3,3'-diiodothyronine (3,3'-T2) via ORD. Catalyzes the phenolic ring deiodinations of 3,3',5'-triiodothyronamine and 3',5'- diiodothyronamine. The protein is Type II iodothyronine deiodinase (Dio2) of Rattus norvegicus (Rat).